Here is a 68-residue protein sequence, read N- to C-terminus: uncharacterized protein (68 aa).

The disordered stretch occupies residues 1–68; that stretch reads METIIRRFSP…GNSKNIKTKK (68 aa). The span at 9–34 shows a compositional bias: basic and acidic residues; sequence SPKEKEKEKEKEEKDEKSKDKKEPIK. The segment covering 42 to 51 has biased composition (acidic residues); that stretch reads DEEEEEDEQE.

This is an uncharacterized protein from Dictyostelium discoideum (Social amoeba).